The sequence spans 265 residues: 3-methyl-2-oxobutanoate hydroxymethyltransferase (265 aa).

2 residues coordinate Mg(2+): Asp-45 and Asp-84. 3-methyl-2-oxobutanoate contacts are provided by residues Asp-45 to Ser-46, Asp-84, and Lys-112. Residue Glu-114 coordinates Mg(2+). Glu-182 functions as the Proton acceptor in the catalytic mechanism.

It belongs to the PanB family. Homodecamer; pentamer of dimers. Mg(2+) serves as cofactor.

It is found in the cytoplasm. It catalyses the reaction 3-methyl-2-oxobutanoate + (6R)-5,10-methylene-5,6,7,8-tetrahydrofolate + H2O = 2-dehydropantoate + (6S)-5,6,7,8-tetrahydrofolate. It functions in the pathway cofactor biosynthesis; (R)-pantothenate biosynthesis; (R)-pantoate from 3-methyl-2-oxobutanoate: step 1/2. Catalyzes the reversible reaction in which hydroxymethyl group from 5,10-methylenetetrahydrofolate is transferred onto alpha-ketoisovalerate to form ketopantoate. The sequence is that of 3-methyl-2-oxobutanoate hydroxymethyltransferase from Baumannia cicadellinicola subsp. Homalodisca coagulata.